A 198-amino-acid polypeptide reads, in one-letter code: Elongation factor Ts (198 aa).

The involved in Mg(2+) ion dislocation from EF-Tu stretch occupies residues 82–85 (SDFV).

The protein belongs to the EF-Ts family.

The protein localises to the cytoplasm. Its function is as follows. Associates with the EF-Tu.GDP complex and induces the exchange of GDP to GTP. It remains bound to the aminoacyl-tRNA.EF-Tu.GTP complex up to the GTP hydrolysis stage on the ribosome. This Desulfosudis oleivorans (strain DSM 6200 / JCM 39069 / Hxd3) (Desulfococcus oleovorans) protein is Elongation factor Ts.